A 301-amino-acid chain; its full sequence is Ribosomal RNA small subunit methyltransferase H (301 aa).

S-adenosyl-L-methionine contacts are provided by residues 31-33 (GGY), Asp-49, Phe-76, Asp-97, and Gln-104.

It belongs to the methyltransferase superfamily. RsmH family.

Its subcellular location is the cytoplasm. It carries out the reaction cytidine(1402) in 16S rRNA + S-adenosyl-L-methionine = N(4)-methylcytidine(1402) in 16S rRNA + S-adenosyl-L-homocysteine + H(+). Its function is as follows. Specifically methylates the N4 position of cytidine in position 1402 (C1402) of 16S rRNA. This chain is Ribosomal RNA small subunit methyltransferase H, found in Ehrlichia ruminantium (strain Welgevonden).